Consider the following 166-residue polypeptide: Cyanate hydratase (166 aa).

Active-site residues include Arg92, Glu95, and Ser118.

It belongs to the cyanase family.

The enzyme catalyses cyanate + hydrogencarbonate + 3 H(+) = NH4(+) + 2 CO2. Catalyzes the reaction of cyanate with bicarbonate to produce ammonia and carbon dioxide. The protein is Cyanate hydratase of Sorghum bicolor (Sorghum).